The following is a 343-amino-acid chain: Lactamase-like protein nscB (343 aa).

Residues His118, His120, Asp122, and His123 each coordinate Zn(2+). The active-site Proton donor/acceptor is Asp122.

This sequence belongs to the metallo-beta-lactamase superfamily. Zn(2+) is required as a cofactor.

The protein operates within secondary metabolite biosynthesis. In terms of biological role, lactamase-like protein; part of the gene cluster that mediates the biosynthesis of neosartoricin B, a prenylated anthracenone that probably exhibits T-cell antiproliferative activity, suggestive of a physiological role as an immunosuppressive agent. The non-reducing polyketide synthase nscA probably synthesizes and cyclizes the decaketide backbone. The hydrolase nscB then mediates the product release through hydrolysis followed by spontaneous decarboxylation. The prenyltransferase nscD catalyzes the addition of the dimethylallyl group to the aromatic C5. The FAD-dependent monooxygenase nscC is then responsible for the stereospecific hydroxylation at C2. Neosartoricin B can be converted into two additional compounds neosartoricins C and D. Neosartoricin C is a spirocyclic compound that is cyclized through the attack of C3 hydroxyl on C14, followed by dehydration. On the other hand, neosartoricin D is a further cyclized compound in which attack of C2 on C14 in neosartoricin C results in the formation of the acetal-containing dioxabicyclo-octanone ring. Both of these compounds are novel and possibly represent related metabolites of the gene cluster. In Arthroderma otae (strain ATCC MYA-4605 / CBS 113480) (Microsporum canis), this protein is Lactamase-like protein nscB.